The sequence spans 211 residues: Uridine kinase (211 aa).

Residue 12 to 19 (GGSGGGKT) coordinates ATP.

It belongs to the uridine kinase family.

It is found in the cytoplasm. The enzyme catalyses uridine + ATP = UMP + ADP + H(+). It carries out the reaction cytidine + ATP = CMP + ADP + H(+). Its pathway is pyrimidine metabolism; CTP biosynthesis via salvage pathway; CTP from cytidine: step 1/3. The protein operates within pyrimidine metabolism; UMP biosynthesis via salvage pathway; UMP from uridine: step 1/1. In Streptococcus thermophilus (strain CNRZ 1066), this protein is Uridine kinase.